Consider the following 347-residue polypeptide: GMP reductase (347 aa).

Residue 108 to 131 (ADFDKMKQILALSPSLKFICIDVA) coordinates NADP(+). Residues Gly-181 and Gly-183 each coordinate K(+). Catalysis depends on Cys-186, which acts as the Thioimidate intermediate. An NADP(+)-binding site is contributed by 216–239 (IVSDGGCSVPGDVAKAFGGGADFV).

The protein belongs to the IMPDH/GMPR family. GuaC type 1 subfamily. In terms of assembly, homotetramer.

The enzyme catalyses IMP + NH4(+) + NADP(+) = GMP + NADPH + 2 H(+). Catalyzes the irreversible NADPH-dependent deamination of GMP to IMP. It functions in the conversion of nucleobase, nucleoside and nucleotide derivatives of G to A nucleotides, and in maintaining the intracellular balance of A and G nucleotides. In Yersinia pestis bv. Antiqua (strain Antiqua), this protein is GMP reductase.